We begin with the raw amino-acid sequence, 953 residues long: 26S proteasome non-ATPase regulatory subunit 1 (953 aa).

M1 is modified (N-acetylmethionine; partial). T273 carries the post-translational modification Phosphothreonine. Residues 279-318 (PGSTNTGTVPGSEKDSDSMETEEKTGSAFVGKTPEASPEP) are disordered. S290 bears the Phosphoserine mark. Over residues 290 to 303 (SEKDSDSMETEEKT) the composition is skewed to basic and acidic residues. The residue at position 310 (K310) is an N6-acetyllysine. T311 is modified (phosphothreonine). The residue at position 315 (S315) is a Phosphoserine. PC repeat units follow at residues 403–436 (TATASLGVIHKGHEKEALQLMATYLPKDTSPGSA), 441–474 (GGLYALGLIHANHGGDIIDYLLNQLKNASNDIVR), 476–510 (GGSLGLGLAAMGTARQDVYDLLKTNLYQDDAVTGE), 511–545 (AAGLALGLVMLGSKNAQAIEDMVGYAQETQHEKIL), 547–580 (GLAVGIALVMYGRMEEADALIESLCRDKDPILRR), 581–616 (SGMYTVAMAYCGSGNNKAIRRLLHVAVSDVNDDVRR), 617–649 (AAVESLGFILFRTPEQCPSVVSLLSESYNPHVR), 651–685 (GAAMALGICCAGTGNKEAINLLEPMTNDPVNYVRQ), 686–726 (GALI…DVMA), and 729–761 (GAILAQGILDAGGHNVTISLQSRTGHTHMPSVV). Position 720 is an N6-acetyllysine (K720). The residue at position 830 (T830) is a Phosphothreonine. S834 is subject to Phosphoserine. Disordered regions lie at residues 839 to 881 (AKKK…LDNP) and 930 to 953 (AHGPKIEEEEQEPEPPEPFEYIDD). Composition is skewed to basic and acidic residues over residues 842–852 (KEKEKEKKEEE) and 859–872 (AEKKEEKEKKKEPE). Acidic residues predominate over residues 936–953 (EEEEQEPEPPEPFEYIDD).

This sequence belongs to the proteasome subunit S1 family. Component of the 19S proteasome regulatory particle complex. The 26S proteasome consists of a 20S core particle (CP) and two 19S regulatory subunits (RP). The regulatory particle is made of a lid composed of 9 subunits, a base containing 6 ATPases and few additional components including PSMD1. Interacts with ADRM1. Interacts with ZFAND1.

Its function is as follows. Component of the 26S proteasome, a multiprotein complex involved in the ATP-dependent degradation of ubiquitinated proteins. This complex plays a key role in the maintenance of protein homeostasis by removing misfolded or damaged proteins, which could impair cellular functions, and by removing proteins whose functions are no longer required. Therefore, the proteasome participates in numerous cellular processes, including cell cycle progression, apoptosis, or DNA damage repair. In Pongo abelii (Sumatran orangutan), this protein is 26S proteasome non-ATPase regulatory subunit 1 (PSMD1).